The chain runs to 77 residues: Acyl carrier protein (77 aa).

One can recognise a Carrier domain in the interval 1–76 (MSIEERVKKI…SAIDYVTKAN (76 aa)). S36 is subject to O-(pantetheine 4'-phosphoryl)serine.

It belongs to the acyl carrier protein (ACP) family. Post-translationally, 4'-phosphopantetheine is transferred from CoA to a specific serine of apo-ACP by AcpS. This modification is essential for activity because fatty acids are bound in thioester linkage to the sulfhydryl of the prosthetic group.

The protein localises to the cytoplasm. It functions in the pathway lipid metabolism; fatty acid biosynthesis. In terms of biological role, carrier of the growing fatty acid chain in fatty acid biosynthesis. This is Acyl carrier protein from Actinobacillus pleuropneumoniae serotype 5b (strain L20).